The primary structure comprises 457 residues: Aromatic amino acid transport protein AroP (457 aa).

The Cytoplasmic portion of the chain corresponds to 1-19 (MMEGQQHGEQLKRGLKNRH). The chain crosses the membrane as a helical span at residues 20–40 (IQLIALGGAIGTGLFLGSASV). The Periplasmic segment spans residues 41-42 (IQ). Residues 43–63 (SAGPGIILGYAIAGFIAFLIM) traverse the membrane as a helical segment. Residues 64–86 (RQLGEMVVEEPVAGSFSHFAYKY) lie on the Cytoplasmic side of the membrane. A helical membrane pass occupies residues 87–107 (WGSFAGFASGWNYWVLYVLVA). At 108 to 117 (MAELTAVGKY) the chain is on the periplasmic side. Residues 118–138 (IQFWYPEIPTWVSAAVFFVVI) traverse the membrane as a helical segment. Residues 139–155 (NAINLTNVTVFGEMEFW) are Cytoplasmic-facing. The chain crosses the membrane as a helical span at residues 156–176 (FAIIKVIAVVAMIIFGGWLLF). Over 177–201 (SGNGGPQASVSNLWDQGGFLPHGFT) the chain is Periplasmic. Residues 202–222 (GLVMMMAIIMFSFGGLELVGI) form a helical membrane-spanning segment. Over 223–240 (TAAEADNPEQSIPKATNQ) the chain is Cytoplasmic. Residues 241–261 (VIYRILIFYIGSLAVLLSLMP) form a helical membrane-spanning segment. Residues 262 to 271 (WTRVTADTSP) are Periplasmic-facing. The chain crosses the membrane as a helical span at residues 272–292 (FVLIFHELGDTFVANALNIVV). The Cytoplasmic segment spans residues 293–333 (LTAALSVYNSCVYCNSRMLFGLAQQGNAPKALASVDKRGVP). A helical transmembrane segment spans residues 334–354 (VNTILVSALVTALCVLINYLA). Over 355–358 (PESA) the chain is Periplasmic. A helical membrane pass occupies residues 359–379 (FGLLMALVVSALVINWAMISL). Residues 380-407 (AHMKFRRAKQEQGVVTRFPALLYPLGNW) lie on the Cytoplasmic side of the membrane. A helical membrane pass occupies residues 408–428 (ICLLFMAVVLVIMLMTPGMAI). Ser-429 is a topological domain (periplasmic). The chain crosses the membrane as a helical span at residues 430-450 (VYLIPVWLVVLGIGYLFKEKT). Topologically, residues 451–457 (AKAVKAH) are cytoplasmic.

This sequence belongs to the amino acid-polyamine-organocation (APC) superfamily. Amino acid transporter (AAT) (TC 2.A.3.1) family.

Its subcellular location is the cell inner membrane. The enzyme catalyses L-phenylalanine(in) + H(+)(in) = L-phenylalanine(out) + H(+)(out). The catalysed reaction is L-tryptophan(in) + H(+)(in) = L-tryptophan(out) + H(+)(out). It carries out the reaction L-tyrosine(in) + H(+)(in) = L-tyrosine(out) + H(+)(out). Functionally, permease that is involved in the active transport across the cytoplasmic membrane of all three aromatic amino acids, phenylalanine, tyrosine and tryptophan. This Escherichia coli O157:H7 protein is Aromatic amino acid transport protein AroP (aroP).